A 1072-amino-acid polypeptide reads, in one-letter code: Guanylyl cyclase C (1072 aa).

Residues 1 to 22 (MTSLLGLAVRLLLFQPTLMFWA) form the signal peptide. The Extracellular portion of the chain corresponds to 23 to 429 (SQVRQKCHNG…PNDVPGLGPQ (407 aa)). 7 N-linked (GlcNAc...) asparagine glycosylation sites follow: asparagine 31, asparagine 74, asparagine 78, asparagine 187, asparagine 194, asparagine 306, and asparagine 401. The helical transmembrane segment at 430-453 (ILMIAVFTLTGIVVVLLLIALLVL) threads the bilayer. The Cytoplasmic portion of the chain corresponds to 454–1072 (RKYRRDHELR…NNSDHDSTYF (619 aa)). Residues 488 to 748 (LKIDDDRRRD…KIESTLAKIF (261 aa)) enclose the Protein kinase domain. One can recognise a Guanylate cyclase domain in the interval 823 to 953 (TIYFSDIVGF…DTVNTASRME (131 aa)).

This sequence belongs to the adenylyl cyclase class-4/guanylyl cyclase family. In terms of assembly, homotrimer. Interacts via its C-terminal region with PDZK2. Interacts with the lectin chaperone VIP36. Glycosylation at Asn-74 and/or Asn-78 is required for interaction with VIP36 while glycosylation at Asn-401 modulates ligand-mediated GC-C activation.

It localises to the cell membrane. Its subcellular location is the endoplasmic reticulum membrane. It catalyses the reaction GTP = 3',5'-cyclic GMP + diphosphate. Its function is as follows. Guanylyl cyclase that catalyzes synthesis of cyclic GMP (cGMP) from GTP. Receptor for the E.coli heat-stable enterotoxin; E.coli enterotoxin markedly stimulates the accumulation of cGMP in mammalian cells expressing GUCY2C. In Rattus norvegicus (Rat), this protein is Guanylyl cyclase C (Gucy2c).